Consider the following 274-residue polypeptide: Formamidopyrimidine-DNA glycosylase (274 aa).

The Schiff-base intermediate with DNA role is filled by Pro2. Glu3 serves as the catalytic Proton donor. The active-site Proton donor; for beta-elimination activity is the Lys56. DNA is bound by residues His89, Arg107, and Lys148. Residues 233–267 (LAYGRAREMCVNCETTLENLKLGQRASVFCPQCQP) form an FPG-type zinc finger. Arg257 (proton donor; for delta-elimination activity) is an active-site residue.

Belongs to the FPG family. As to quaternary structure, monomer. Zn(2+) is required as a cofactor.

The enzyme catalyses Hydrolysis of DNA containing ring-opened 7-methylguanine residues, releasing 2,6-diamino-4-hydroxy-5-(N-methyl)formamidopyrimidine.. It catalyses the reaction 2'-deoxyribonucleotide-(2'-deoxyribose 5'-phosphate)-2'-deoxyribonucleotide-DNA = a 3'-end 2'-deoxyribonucleotide-(2,3-dehydro-2,3-deoxyribose 5'-phosphate)-DNA + a 5'-end 5'-phospho-2'-deoxyribonucleoside-DNA + H(+). In terms of biological role, involved in base excision repair of DNA damaged by oxidation or by mutagenic agents. Acts as a DNA glycosylase that recognizes and removes damaged bases. Has a preference for oxidized purines, such as 7,8-dihydro-8-oxoguanine (8-oxoG). Has AP (apurinic/apyrimidinic) lyase activity and introduces nicks in the DNA strand. Cleaves the DNA backbone by beta-delta elimination to generate a single-strand break at the site of the removed base with both 3'- and 5'-phosphates. The sequence is that of Formamidopyrimidine-DNA glycosylase from Acinetobacter baumannii (strain SDF).